Consider the following 92-residue polypeptide: Putative protein IntG (92 aa).

This sequence belongs to the 'phage' integrase family.

In Escherichia coli (strain K12), this protein is Putative protein IntG (intG).